Here is a 215-residue protein sequence, read N- to C-terminus: ATP-dependent dethiobiotin synthetase BioD (215 aa).

13–18 (DIGKTV) contacts ATP. Mg(2+) is bound at residue Thr-17. Residue Lys-38 is part of the active site. Thr-42 is a binding site for substrate. Residues Asp-50, 115–118 (EGAG), and 175–176 (NH) contribute to the ATP site. The Mg(2+) site is built by Asp-50 and Glu-115.

It belongs to the dethiobiotin synthetase family. As to quaternary structure, homodimer. Mg(2+) is required as a cofactor.

The protein resides in the cytoplasm. The enzyme catalyses (7R,8S)-7,8-diammoniononanoate + CO2 + ATP = (4R,5S)-dethiobiotin + ADP + phosphate + 3 H(+). It participates in cofactor biosynthesis; biotin biosynthesis; biotin from 7,8-diaminononanoate: step 1/2. Functionally, catalyzes a mechanistically unusual reaction, the ATP-dependent insertion of CO2 between the N7 and N8 nitrogen atoms of 7,8-diaminopelargonic acid (DAPA, also called 7,8-diammoniononanoate) to form a ureido ring. The polypeptide is ATP-dependent dethiobiotin synthetase BioD (Neisseria meningitidis serogroup C / serotype 2a (strain ATCC 700532 / DSM 15464 / FAM18)).